The chain runs to 460 residues: Protein btn1 (460 aa).

11 consecutive transmembrane segments (helical) span residues 42 to 62 (VCVA…VILS), 76 to 96 (VVLL…PYFI), 105 to 125 (IIIF…SPPY), 135 to 155 (LAGI…FVGL), 164 to 184 (LAAW…AYAL), 195 to 215 (ATLL…FMVL), 287 to 307 (GLFF…YTIN), 323 to 343 (FAHF…GVFI), 356 to 376 (LYLP…QAVF), 378 to 398 (FIPS…LGGL), and 428 to 448 (AAGI…LCDW).

Belongs to the battenin family.

It localises to the vacuole membrane. In terms of biological role, involved in vacuolar transport and vacuole pH homeostasis. Also required for cytokinesis. The sequence is that of Protein btn1 (btn1) from Aspergillus fumigatus (strain ATCC MYA-4609 / CBS 101355 / FGSC A1100 / Af293) (Neosartorya fumigata).